The sequence spans 101 residues: Small ribosomal subunit protein bS6 (101 aa).

It belongs to the bacterial ribosomal protein bS6 family.

In terms of biological role, binds together with bS18 to 16S ribosomal RNA. In Pseudarthrobacter chlorophenolicus (strain ATCC 700700 / DSM 12829 / CIP 107037 / JCM 12360 / KCTC 9906 / NCIMB 13794 / A6) (Arthrobacter chlorophenolicus), this protein is Small ribosomal subunit protein bS6.